We begin with the raw amino-acid sequence, 383 residues long: MIISSGNDYRAAAQRRLPPFLFHYIDGGAYAEYTLKRNVQDLSEIALRQRVLNDMSALSLETKLFNETLSMPVALAPVGLTGMYARRGEVQAAMAADKKGIPFTLSTVSVCPIEEVAPAINRPMWFQLYVLRDRGFMRNALERAKAAGCSTLVFTVDMPVPGARYRDAHSGMSGPNAAMRRYMQSVFHPHWSWNVGLMGRPHDLGNISKYLGKPTGLEDYIGWLGSNFDPSISWKDLEWIREFWDGPMVIKGILDPEDAKDAVRFGADGIVVSNHGGRQLDGVMSSARALPAIADAVKGDLAILADSGIRNGLDVVRMLALGADTVLLGRAFVYALAAAGGQGVSNLLDLIDKEMRVAMTLTGAKSISDINADCLVQAIKQGL.

Residues 1–380 (MIISSGNDYR…NADCLVQAIK (380 aa)) form the FMN hydroxy acid dehydrogenase domain. Y24 serves as a coordination point for substrate. FMN is bound by residues S106 and Q127. Y129 is a substrate binding site. T155 lines the FMN pocket. Residue R164 participates in substrate binding. K251 provides a ligand contact to FMN. H275 acts as the Proton acceptor in catalysis. R278 is a binding site for substrate. Position 306 to 330 (306 to 330 (DSGIRNGLDVVRMLALGADTVLLGR)) interacts with FMN.

Belongs to the FMN-dependent alpha-hydroxy acid dehydrogenase family. Requires FMN as cofactor.

The protein localises to the cell inner membrane. It carries out the reaction (S)-lactate + A = pyruvate + AH2. Catalyzes the conversion of L-lactate to pyruvate. Is coupled to the respiratory chain. The sequence is that of L-lactate dehydrogenase from Acinetobacter baumannii (strain AB307-0294).